The primary structure comprises 237 residues: MTDSYKLPDNPGDPDATDDEGIHPDEVENLIEEAERTQGGSEDDDLLTTEPDPVVDAREDDRDPTLEEDLEGDLQAVLDDIDAELGVADTPEATGDLPTTEAQLAERTEDLQRVTAEYANYRRRTERERAGIIDTAKSGVVSKLLPILDDLDLAEQHGDLEEGPLKAFADKFRNTLTGLKVEAFGVPGDTFDPEIHEAVQDLSEGDTKVLGTVLRKGYRFNDKLIRNAMVIIADPEK.

The disordered stretch occupies residues 1 to 65 (MTDSYKLPDN…DAREDDRDPT (65 aa)). The segment covering 55–65 (VDAREDDRDPT) has biased composition (basic and acidic residues).

Belongs to the GrpE family. As to quaternary structure, homodimer.

It is found in the cytoplasm. Functionally, participates actively in the response to hyperosmotic and heat shock by preventing the aggregation of stress-denatured proteins, in association with DnaK and GrpE. It is the nucleotide exchange factor for DnaK and may function as a thermosensor. Unfolded proteins bind initially to DnaJ; upon interaction with the DnaJ-bound protein, DnaK hydrolyzes its bound ATP, resulting in the formation of a stable complex. GrpE releases ADP from DnaK; ATP binding to DnaK triggers the release of the substrate protein, thus completing the reaction cycle. Several rounds of ATP-dependent interactions between DnaJ, DnaK and GrpE are required for fully efficient folding. The sequence is that of Protein GrpE from Corynebacterium efficiens (strain DSM 44549 / YS-314 / AJ 12310 / JCM 11189 / NBRC 100395).